Consider the following 535-residue polypeptide: Ankyrin repeat domain-containing protein 34C (535 aa).

ANK repeat units follow at residues 10 to 39, 43 to 80, 84 to 114, and 118 to 147; these read TDGN…YINE, KGET…DPNI, SGKT…DPSL, and TGAS…AKGK. Disordered regions lie at residues 159–181 and 214–237; these read SGTK…DRHS and AGHP…RKVS. Residues 216 to 225 are compositionally biased toward polar residues; sequence HPSSCNTSKA. Residue Ser301 is modified to Phosphoserine. The interval 381–444 is disordered; it reads DLDIQPGPDP…RRRPPHLLER (64 aa). The residue at position 447 (Ser447) is a Phosphoserine.

Belongs to the ANKRD34 family.

The protein is Ankyrin repeat domain-containing protein 34C (ANKRD34C) of Homo sapiens (Human).